Here is a 438-residue protein sequence, read N- to C-terminus: Serine--tRNA ligase (438 aa).

243-245 (TAE) contacts L-serine. 274–276 (RSE) contributes to the ATP binding site. L-serine is bound at residue E297. 361 to 364 (EISS) lines the ATP pocket. S396 lines the L-serine pocket.

The protein belongs to the class-II aminoacyl-tRNA synthetase family. Type-1 seryl-tRNA synthetase subfamily. Homodimer. The tRNA molecule binds across the dimer.

It is found in the cytoplasm. The enzyme catalyses tRNA(Ser) + L-serine + ATP = L-seryl-tRNA(Ser) + AMP + diphosphate + H(+). It carries out the reaction tRNA(Sec) + L-serine + ATP = L-seryl-tRNA(Sec) + AMP + diphosphate + H(+). The protein operates within aminoacyl-tRNA biosynthesis; selenocysteinyl-tRNA(Sec) biosynthesis; L-seryl-tRNA(Sec) from L-serine and tRNA(Sec): step 1/1. Functionally, catalyzes the attachment of serine to tRNA(Ser). Is also able to aminoacylate tRNA(Sec) with serine, to form the misacylated tRNA L-seryl-tRNA(Sec), which will be further converted into selenocysteinyl-tRNA(Sec). This is Serine--tRNA ligase from Ralstonia pickettii (strain 12J).